Consider the following 245-residue polypeptide: Eukaryotic translation initiation factor 6 (245 aa).

The protein belongs to the eIF-6 family. In terms of assembly, monomer. Associates with the 60S ribosomal subunit.

The protein resides in the cytoplasm. Its subcellular location is the nucleus. It is found in the nucleolus. Functionally, binds to the 60S ribosomal subunit and prevents its association with the 40S ribosomal subunit to form the 80S initiation complex in the cytoplasm. May also be involved in ribosome biogenesis. This is Eukaryotic translation initiation factor 6 from Tetrahymena thermophila (strain SB210).